The following is a 322-amino-acid chain: Ribonucleoside-diphosphate reductase subunit beta nrdF1 (322 aa).

Fe cation is bound by residues aspartate 70, glutamate 101, and histidine 104. Tyrosine 108 is an active-site residue. Positions 161, 195, and 198 each coordinate Fe cation.

This sequence belongs to the ribonucleoside diphosphate reductase small chain family. In terms of assembly, tetramer of two alpha and two beta subunits. Requires Fe cation as cofactor.

The catalysed reaction is a 2'-deoxyribonucleoside 5'-diphosphate + [thioredoxin]-disulfide + H2O = a ribonucleoside 5'-diphosphate + [thioredoxin]-dithiol. Provides the precursors necessary for DNA synthesis. Catalyzes the biosynthesis of deoxyribonucleotides from the corresponding ribonucleotides. The protein is Ribonucleoside-diphosphate reductase subunit beta nrdF1 (nrdF1) of Mycobacterium tuberculosis (strain CDC 1551 / Oshkosh).